A 148-amino-acid polypeptide reads, in one-letter code: Transcriptional regulator MraZ (148 aa).

SpoVT-AbrB domains lie at 5–51 (STQL…PQPV) and 80–123 (ACDV…DMAK).

The protein belongs to the MraZ family. In terms of assembly, forms oligomers.

It is found in the cytoplasm. It localises to the nucleoid. The polypeptide is Transcriptional regulator MraZ (Nitrosomonas eutropha (strain DSM 101675 / C91 / Nm57)).